The primary structure comprises 159 residues: Phosphopantetheine adenylyltransferase (159 aa).

Thr-10 contacts substrate. ATP-binding positions include 10–11 (TF) and His-18. Lys-42, Leu-74, and Arg-88 together coordinate substrate. Residues 89 to 91 (GLR), Glu-99, and 124 to 130 (NSFISST) contribute to the ATP site.

Belongs to the bacterial CoaD family. Homohexamer. Mg(2+) serves as cofactor.

It is found in the cytoplasm. The enzyme catalyses (R)-4'-phosphopantetheine + ATP + H(+) = 3'-dephospho-CoA + diphosphate. The protein operates within cofactor biosynthesis; coenzyme A biosynthesis; CoA from (R)-pantothenate: step 4/5. Functionally, reversibly transfers an adenylyl group from ATP to 4'-phosphopantetheine, yielding dephospho-CoA (dPCoA) and pyrophosphate. The sequence is that of Phosphopantetheine adenylyltransferase from Shewanella pealeana (strain ATCC 700345 / ANG-SQ1).